The chain runs to 338 residues: Large ribosomal subunit protein uL10 (338 aa).

The segment covering 298–308 (AAQQTQTQQST) has biased composition (low complexity). Residues 298-338 (AAQQTQTQQSTAEEKKEEKKEEEKKGPSEEEIGSGLASLFG) are disordered. Over residues 309–325 (AEEKKEEKKEEEKKGPS) the composition is skewed to basic and acidic residues.

The protein belongs to the universal ribosomal protein uL10 family. In terms of assembly, part of the 50S ribosomal subunit. Forms part of the ribosomal stalk which helps the ribosome interact with GTP-bound translation factors. Forms a heptameric L10(L12)2(L12)2(L12)2 complex, where L10 forms an elongated spine to which the L12 dimers bind in a sequential fashion.

In terms of biological role, forms part of the ribosomal stalk, playing a central role in the interaction of the ribosome with GTP-bound translation factors. The protein is Large ribosomal subunit protein uL10 of Saccharolobus islandicus (strain M.16.27) (Sulfolobus islandicus).